Reading from the N-terminus, the 775-residue chain is ATP-dependent 6-phosphofructokinase 2 (775 aa).

The tract at residues 1–390 is N-terminal catalytic PFK domain 1; it reads MTNTILDTYS…YHSAYRHLNT (390 aa). ATP is bound by residues glycine 25, 88–89, and 118–121; these read RC and GDGS. Aspartate 119 provides a ligand contact to Mg(2+). Substrate-binding positions include 164 to 166, arginine 201, 208 to 210, glutamate 264, arginine 292, and 298 to 301; these read SID, MGR, and HIQR. Aspartate 166 (proton acceptor) is an active-site residue. An interdomain linker region spans residues 391 to 404; the sequence is SDHPKMVLPEDKRM. The C-terminal regulatory PFK domain 2 stretch occupies residues 405–775; sequence RVAIIHVGAP…GRSSLYAIPN (371 aa). Beta-D-fructose 2,6-bisphosphate-binding positions include 537–541, 582–584, aspartate 640, and 672–675; these read SMSNN, QGA, and HFQQ.

The protein belongs to the phosphofructokinase type A (PFKA) family. ATP-dependent PFK group I subfamily. Eukaryotic two domain clade 'E' sub-subfamily. As to quaternary structure, homotetramer. Requires Mg(2+) as cofactor.

Its subcellular location is the cytoplasm. It catalyses the reaction beta-D-fructose 6-phosphate + ATP = beta-D-fructose 1,6-bisphosphate + ADP + H(+). Its pathway is carbohydrate degradation; glycolysis; D-glyceraldehyde 3-phosphate and glycerone phosphate from D-glucose: step 3/4. Allosterically activated by ADP, AMP, or fructose 2,6-bisphosphate, and allosterically inhibited by ATP or citrate. Its function is as follows. Catalyzes the phosphorylation of D-fructose 6-phosphate to fructose 1,6-bisphosphate by ATP, the first committing step of glycolysis. The sequence is that of ATP-dependent 6-phosphofructokinase 2 (pfkB) from Aspergillus oryzae (strain ATCC 42149 / RIB 40) (Yellow koji mold).